A 193-amino-acid polypeptide reads, in one-letter code: Major intrinsically disordered NOTCH2-binding receptor 1-like homolog (193 aa).

At serine 82 the chain carries Phosphoserine. Asparagine 128 is a glycosylation site (N-linked (GlcNAc...) asparagine). The chain crosses the membrane as a helical span at residues 172–192 (GLILLLVASILVTIVTLSTIF).

The protein belongs to the MINAR family. As to quaternary structure, interacts with NOTCH2. As to expression, widely expressed in the cortex and Purkinje cells of cerebellum. Expressed in the inner ear, mainly in the hair cells, spiral ganglia, the spiral limbus, and the stria vascularis.

It is found in the lysosome membrane. Its subcellular location is the endoplasmic reticulum membrane. Binds cholesterol and may regulate the distribution and homeostasis of cholesterol in hair cells. May play a role in angiogenesis. The chain is Major intrinsically disordered NOTCH2-binding receptor 1-like homolog from Mus musculus (Mouse).